A 329-amino-acid polypeptide reads, in one-letter code: Malate dehydrogenase (329 aa).

12 to 18 (GAAGQIG) contacts NAD(+). Substrate-binding residues include Arg93 and Arg99. Residues Asn106, Gln113, and 130-132 (VGN) contribute to the NAD(+) site. Substrate contacts are provided by Asn132 and Arg166. His191 (proton acceptor) is an active-site residue.

It belongs to the LDH/MDH superfamily. MDH type 2 family.

The catalysed reaction is (S)-malate + NAD(+) = oxaloacetate + NADH + H(+). Catalyzes the reversible oxidation of malate to oxaloacetate. This Aromatoleum aromaticum (strain DSM 19018 / LMG 30748 / EbN1) (Azoarcus sp. (strain EbN1)) protein is Malate dehydrogenase.